The sequence spans 493 residues: Leucine-rich repeat-containing protein 14 (493 aa).

An LRR 1; degenerate repeat occupies 111–146 (KHALRVLDMTGLLDDGVEQDPETMSMWDCTAAVART). The LRR 2; degenerate repeat unit spans residues 194-218 (RLCCRDLRAEDLPMRNTVALLQLLD). An LRR 3; degenerate repeat occupies 219–246 (AGCLRRIDLRFNNLGLRGLSVIIPHVAR). An LRR 4; degenerate repeat occupies 247-282 (FQHLASLRLHYVHGDSRQPSVDGEDNFRYFLAQMGR). LRR repeat units lie at residues 283–307 (FMCLRELSMGSSLLSGRLDQLLSTL), 308–339 (QRPLESLELAFCALLPEDLRFLAQSSHAAHLK), 340–360 (KLDLSGNDLSGNQLTPFQGLL), 364–391 (ATTLLHLELTECQLADAQLLATLPTLTR), and 392–416 (CASLRYLGLYGNPLSMAGLKELLRD).

It belongs to the PRAME family. LRRC14 subfamily. Interacts with IKBKB; disrupts IKBKB-IKBKG interaction preventing I-kappa-B-kinase (IKK) core complex formation and leading to a decrease of IKBKB phosphorylation and NF-kappaB activation. Interacts with CHUK.

It localises to the cytoplasm. Functionally, negatively regulates Toll-like receptor-mediated NF-kappa-B signaling by disrupting IKK core complex formation through interaction with IKBKB. In Mus musculus (Mouse), this protein is Leucine-rich repeat-containing protein 14.